The following is a 157-amino-acid chain: Peptide methionine sulfoxide reductase MsrA (157 aa).

The active site involves C13.

This sequence belongs to the MsrA Met sulfoxide reductase family.

It carries out the reaction L-methionyl-[protein] + [thioredoxin]-disulfide + H2O = L-methionyl-(S)-S-oxide-[protein] + [thioredoxin]-dithiol. It catalyses the reaction [thioredoxin]-disulfide + L-methionine + H2O = L-methionine (S)-S-oxide + [thioredoxin]-dithiol. In terms of biological role, has an important function as a repair enzyme for proteins that have been inactivated by oxidation. Catalyzes the reversible oxidation-reduction of methionine sulfoxide in proteins to methionine. The sequence is that of Peptide methionine sulfoxide reductase MsrA from Methanococcus maripaludis (strain C7 / ATCC BAA-1331).